The primary structure comprises 346 residues: Calcium uniporter protein, mitochondrial (346 aa).

Residues 1 to 195 (MTKGKLLTTP…ECDKAAHRGA (195 aa)) lie on the Mitochondrial matrix side of the membrane. The segment at 55–120 (ELPPPDPQDS…GEGKDEGEFV (66 aa)) is disordered. 2 stretches are compositionally biased toward basic and acidic residues: residues 76 to 91 (MEAK…KADT) and 109 to 119 (REGEGKDEGEF). The helical transmembrane segment at 196–216 (QRIALAGCGGLIGYWYIVYRL) threads the bilayer. Residues 217-226 (TFETDLGWDV) are Mitochondrial intermembrane-facing. The short motif at 224 to 232 (WDVMEPVTY) is the Selectivity filter element. The helical transmembrane segment at 227–248 (MEPVTYLVGLSTLIGGYMWFLW) threads the bilayer. E228 serves as a coordination point for Ca(2+). Topologically, residues 249–346 (HNREVSYRSA…KEGEEDDEDD (98 aa)) are mitochondrial matrix. Positions 306-346 (WNETQDEGGDEKVTKALRDERKNNNGTKNKSKEGEEDDEDD) are disordered. A compositionally biased stretch (basic and acidic residues) spans 315–328 (DEKVTKALRDERKN).

Belongs to the MCU (TC 1.A.77) family. As to quaternary structure, homotetramer, assembles in a dimer or dimers configuration with two interfaces.

Its subcellular location is the mitochondrion inner membrane. It catalyses the reaction Ca(2+)(in) = Ca(2+)(out). Highly selective calcium channel localized to the inner mitochondrial membrane, which mediates calcium uptake into the mitochondrial matrix. Mitochondrial calcium homeostasis plays key roles in cellular physiology and regulates ATP production, cytoplasmic calcium signals and activation of cell death pathways. Sufficient to operate as a pore-forming channel without the need of calcium-sensor or auxiliary subunit. The protein is Calcium uniporter protein, mitochondrial of Cyphellophora europaea (strain CBS 101466) (Phialophora europaea).